The chain runs to 81 residues: MKTLLLTLVVVTIVCLDLGYTLKCNKLVPLFYKTCPAGKNLCYKMFMVSNKMVPVKRGCIDVCPKNSALVKYVCCNTDRCN.

The signal sequence occupies residues 1-21 (MKTLLLTLVVVTIVCLDLGYT). Cystine bridges form between Cys24–Cys42, Cys35–Cys59, Cys63–Cys74, and Cys75–Cys80.

It belongs to the three-finger toxin family. Short-chain subfamily. Type IA cytotoxin sub-subfamily. In terms of assembly, monomer in solution; Homodimer and oligomer in the presence of negatively charged lipids forming a pore with a size ranging between 20 and 30 Angstroms. In terms of tissue distribution, expressed by the venom gland.

The protein localises to the secreted. Its subcellular location is the target cell membrane. Functionally, shows cytolytic activity on many different cells by forming pore in lipid membranes. In vivo, increases heart rate or kills the animal by cardiac arrest. In addition, it binds to heparin with high affinity, interacts with Kv channel-interacting protein 1 (KCNIP1) in a calcium-independent manner, and binds to integrin alpha-V/beta-3 (ITGAV/ITGB3) with moderate affinity. This is Cytotoxin 5 from Naja atra (Chinese cobra).